The sequence spans 699 residues: Elongation factor G 2 (699 aa).

A tr-type G domain is found at 8 to 290 (ERYRNIGICA…AVIEYLPSPT (283 aa)). Residues 17-24 (AHVDAGKT), 88-92 (DTPGH), and 142-145 (NKMD) each bind GTP.

This sequence belongs to the TRAFAC class translation factor GTPase superfamily. Classic translation factor GTPase family. EF-G/EF-2 subfamily.

It is found in the cytoplasm. Functionally, catalyzes the GTP-dependent ribosomal translocation step during translation elongation. During this step, the ribosome changes from the pre-translocational (PRE) to the post-translocational (POST) state as the newly formed A-site-bound peptidyl-tRNA and P-site-bound deacylated tRNA move to the P and E sites, respectively. Catalyzes the coordinated movement of the two tRNA molecules, the mRNA and conformational changes in the ribosome. The chain is Elongation factor G 2 from Colwellia psychrerythraea (strain 34H / ATCC BAA-681) (Vibrio psychroerythus).